The sequence spans 207 residues: Superoxide dismutase [Mn] (207 aa).

Mn(2+) is bound by residues H30, H78, D166, and H170.

The protein belongs to the iron/manganese superoxide dismutase family. As to quaternary structure, homodimer. The cofactor is Mn(2+).

The enzyme catalyses 2 superoxide + 2 H(+) = H2O2 + O2. Its function is as follows. Destroys superoxide anion radicals which are normally produced within the cells and which are toxic to biological systems. This is Superoxide dismutase [Mn] (sodA) from Chlamydia pneumoniae (Chlamydophila pneumoniae).